The sequence spans 308 residues: Ribosomal RNA small subunit methyltransferase H (308 aa).

S-adenosyl-L-methionine contacts are provided by residues 32–34 (GGH), D52, F78, D100, and Q107.

The protein belongs to the methyltransferase superfamily. RsmH family.

It is found in the cytoplasm. The catalysed reaction is cytidine(1402) in 16S rRNA + S-adenosyl-L-methionine = N(4)-methylcytidine(1402) in 16S rRNA + S-adenosyl-L-homocysteine + H(+). In terms of biological role, specifically methylates the N4 position of cytidine in position 1402 (C1402) of 16S rRNA. This Legionella pneumophila (strain Paris) protein is Ribosomal RNA small subunit methyltransferase H.